Here is a 634-residue protein sequence, read N- to C-terminus: Threonine--tRNA ligase (634 aa).

A TGS domain is found at 1 to 61 (MINITLPDGS…DHDASLRIIT (61 aa)). The catalytic stretch occupies residues 243 to 534 (DHRRIGKAQD…LIEHHAGAFP (292 aa)). 3 residues coordinate Zn(2+): C334, H385, and H511.

It belongs to the class-II aminoacyl-tRNA synthetase family. Homodimer. It depends on Zn(2+) as a cofactor.

It is found in the cytoplasm. It catalyses the reaction tRNA(Thr) + L-threonine + ATP = L-threonyl-tRNA(Thr) + AMP + diphosphate + H(+). Catalyzes the attachment of threonine to tRNA(Thr) in a two-step reaction: L-threonine is first activated by ATP to form Thr-AMP and then transferred to the acceptor end of tRNA(Thr). Also edits incorrectly charged L-seryl-tRNA(Thr). The polypeptide is Threonine--tRNA ligase (Xanthomonas oryzae pv. oryzae (strain MAFF 311018)).